The chain runs to 257 residues: 5'-nucleotidase SurE (257 aa).

Residues Asp-8, Asp-9, Ser-40, and Asn-92 each coordinate a divalent metal cation.

The protein belongs to the SurE nucleotidase family. The cofactor is a divalent metal cation.

The protein resides in the cytoplasm. The enzyme catalyses a ribonucleoside 5'-phosphate + H2O = a ribonucleoside + phosphate. Functionally, nucleotidase that shows phosphatase activity on nucleoside 5'-monophosphates. In Rhizobium leguminosarum bv. trifolii (strain WSM2304), this protein is 5'-nucleotidase SurE.